We begin with the raw amino-acid sequence, 619 residues long: Serine/threonine-protein kinase pkn1 (619 aa).

The region spanning Tyr-15–Leu-302 is the Protein kinase domain. Lys-21–Asp-29 is an ATP binding site. Glu-141 functions as the Proton acceptor in the catalytic mechanism.

The protein belongs to the protein kinase superfamily. Ser/Thr protein kinase family. In terms of processing, autophosphorylated on serine and threonine residues.

The catalysed reaction is L-seryl-[protein] + ATP = O-phospho-L-seryl-[protein] + ADP + H(+). It carries out the reaction L-threonyl-[protein] + ATP = O-phospho-L-threonyl-[protein] + ADP + H(+). Its function is as follows. Together with the serine/threonine kinase PknD, may play a role in the specific interactions with host proteins during intracellular growth. The protein is Serine/threonine-protein kinase pkn1 (pkn1) of Chlamydia pneumoniae (Chlamydophila pneumoniae).